The sequence spans 207 residues: uncharacterized protein (207 aa).

In terms of domain architecture, YrdC-like spans A14 to G201.

It belongs to the SUA5 family.

This is an uncharacterized protein from Haemophilus influenzae (strain ATCC 51907 / DSM 11121 / KW20 / Rd).